The primary structure comprises 467 residues: Uronate isomerase (467 aa).

Belongs to the metallo-dependent hydrolases superfamily. Uronate isomerase family.

The enzyme catalyses D-glucuronate = D-fructuronate. It carries out the reaction aldehydo-D-galacturonate = keto-D-tagaturonate. Its pathway is carbohydrate metabolism; pentose and glucuronate interconversion. This Staphylococcus haemolyticus (strain JCSC1435) protein is Uronate isomerase.